Reading from the N-terminus, the 305-residue chain is Axin interactor, dorsalization-associated protein B (305 aa).

The span at 126-137 (ENLEVEEEEEDG) shows a compositional bias: acidic residues. Residues 126 to 146 (ENLEVEEEEEDGGAGAGSPDL) form a disordered region. The interval 153–220 (GTLLPRLPSE…RKEDTYVHFN (68 aa)) is axin-binding. The C2 Aida-type domain occupies 156–303 (LPRLPSEPGM…LYLHLLQTLL (148 aa)).

It belongs to the AIDA family.

Its function is as follows. Acts as a ventralizing factor during embryogenesis. Inhibits axin-mediated JNK activation by binding axin and disrupting axin homodimerization. This in turn antagonizes a Wnt/beta-catenin-independent dorsalization pathway activated by axin/JNK-signaling. The polypeptide is Axin interactor, dorsalization-associated protein B (aida-b) (Xenopus laevis (African clawed frog)).